Here is a 642-residue protein sequence, read N- to C-terminus: Threonine--tRNA ligase (642 aa).

Residues Met-1–Thr-61 form the TGS domain. Positions Asp-243–Pro-534 are catalytic. Zn(2+) contacts are provided by Cys-334, His-385, and His-511.

The protein belongs to the class-II aminoacyl-tRNA synthetase family. In terms of assembly, homodimer. Requires Zn(2+) as cofactor.

The protein localises to the cytoplasm. It catalyses the reaction tRNA(Thr) + L-threonine + ATP = L-threonyl-tRNA(Thr) + AMP + diphosphate + H(+). Catalyzes the attachment of threonine to tRNA(Thr) in a two-step reaction: L-threonine is first activated by ATP to form Thr-AMP and then transferred to the acceptor end of tRNA(Thr). Also edits incorrectly charged L-seryl-tRNA(Thr). The protein is Threonine--tRNA ligase of Shewanella baltica (strain OS155 / ATCC BAA-1091).